Here is a 1679-residue protein sequence, read N- to C-terminus: Furin-like protease 2 (1679 aa).

The segment covering 1–10 (MSNTTRSSRV) has biased composition (polar residues). The segment at 1–42 (MSNTTRSSRVTIGRIGTTPQITDPWSSGLEKQRPSRCGGPKS) is disordered. N3, N109, and N130 each carry an N-linked (GlcNAc...) asparagine glycan. Residues 139-164 (VSSLHSSRRTNPPSSSSSSSSNVDVD) form a disordered region. Positions 147-160 (RTNPPSSSSSSSSN) are enriched in low complexity. N-linked (GlcNAc...) asparagine glycosylation occurs at N205. The 323-residue stretch at 383–705 (QWYLNGGAKD…YGLMDAGAMV (323 aa)) folds into the Peptidase S8 domain. D417 acts as the Charge relay system in catalysis. A disordered region spans residues 424–456 (HPDLAQNYDPEASFDINGNDSDPTPQDNGDNKH). A compositionally biased stretch (polar residues) spans 439-451 (INGNDSDPTPQDN). The N-linked (GlcNAc...) asparagine glycan is linked to N442. Residue H456 is the Charge relay system of the active site. Intrachain disulfides connect C473–C629 and C565–C595. The N-linked (GlcNAc...) asparagine glycan is linked to N480. S637 serves as the catalytic Charge relay system. One can recognise a P/Homo B domain in the interval 714-852 (VPPQHICKSR…QLIFYGTSTQ (139 aa)). C720 and C748 are oxidised to a cystine. The N-linked (GlcNAc...) asparagine glycan is linked to N927. 10 FU repeats span residues 961–1006 (KKIL…RSFP), 1009–1056 (VGIC…GYFE), 1060–1104 (NRTC…DTYE), 1107–1152 (DNKC…GFYA), 1156–1204 (RLEC…SEFY), 1208–1253 (EGQC…GFFV), 1256–1299 (GSLC…GYYS), 1301–1346 (RGIC…GFYK), 1348–1393 (DFGC…QYYD), and 1396–1443 (SATC…QTLA). An N-linked (GlcNAc...) asparagine glycan is attached at N1060. N-linked (GlcNAc...) asparagine glycosylation is present at N1181. N-linked (GlcNAc...) asparagine glycans are attached at residues N1274 and N1277. N-linked (GlcNAc...) asparagine glycosylation occurs at N1439. The chain crosses the membrane as a helical span at residues 1512-1532 (AIAVAICLLIITIFSIIFAVL). At 1533–1679 (QRNSNHVSRN…STTSRTNIRS (147 aa)) the chain is on the cytoplasmic side. Residues 1660-1679 (TNAERKNHPSSTTSRTNIRS) are disordered. Polar residues predominate over residues 1668 to 1679 (PSSTTSRTNIRS).

The protein belongs to the peptidase S8 family. Furin subfamily. Ca(2+) is required as a cofactor. In terms of tissue distribution, transient expression in a subset of central nervous system neurons during embryonic stages 12-13. Expression in developing tracheal tree from stage 13 to end of embryonic development.

Its subcellular location is the membrane. It catalyses the reaction Release of mature proteins from their proproteins by cleavage of -Arg-Xaa-Yaa-Arg-|-Zaa- bonds, where Xaa can be any amino acid and Yaa is Arg or Lys. Releases albumin, complement component C3 and von Willebrand factor from their respective precursors.. Furin is likely to represent the ubiquitous endoprotease activity within constitutive secretory pathways and capable of cleavage at the RX(K/R)R consensus motif. This Drosophila melanogaster (Fruit fly) protein is Furin-like protease 2 (Fur2).